A 177-amino-acid chain; its full sequence is Large ribosomal subunit protein uL6 (177 aa).

Belongs to the universal ribosomal protein uL6 family. Part of the 50S ribosomal subunit.

Its function is as follows. This protein binds to the 23S rRNA, and is important in its secondary structure. It is located near the subunit interface in the base of the L7/L12 stalk, and near the tRNA binding site of the peptidyltransferase center. The protein is Large ribosomal subunit protein uL6 of Pseudomonas syringae pv. tomato (strain ATCC BAA-871 / DC3000).